Here is a 133-residue protein sequence, read N- to C-terminus: Phosphoribosyl-AMP cyclohydrolase (133 aa).

A Mg(2+)-binding site is contributed by D77. C78 contributes to the Zn(2+) binding site. Mg(2+) contacts are provided by D79 and D81. Zn(2+) contacts are provided by C95 and C102.

Belongs to the PRA-CH family. As to quaternary structure, homodimer. Mg(2+) serves as cofactor. Requires Zn(2+) as cofactor.

Its subcellular location is the cytoplasm. It catalyses the reaction 1-(5-phospho-beta-D-ribosyl)-5'-AMP + H2O = 1-(5-phospho-beta-D-ribosyl)-5-[(5-phospho-beta-D-ribosylamino)methylideneamino]imidazole-4-carboxamide. It functions in the pathway amino-acid biosynthesis; L-histidine biosynthesis; L-histidine from 5-phospho-alpha-D-ribose 1-diphosphate: step 3/9. Functionally, catalyzes the hydrolysis of the adenine ring of phosphoribosyl-AMP. The polypeptide is Phosphoribosyl-AMP cyclohydrolase (Azotobacter vinelandii (strain DJ / ATCC BAA-1303)).